We begin with the raw amino-acid sequence, 118 residues long: uncharacterized protein (118 aa).

This is an uncharacterized protein from Haemophilus influenzae (strain ATCC 51907 / DSM 11121 / KW20 / Rd).